Here is a 349-residue protein sequence, read N- to C-terminus: Decapping nuclease RAI1 (349 aa).

Residue glutamate 157 participates in a divalent metal cation binding. Residue glutamate 205 participates in substrate binding. Residues aspartate 207, glutamate 222, and leucine 223 each contribute to the a divalent metal cation site. Lysine 224 and glutamine 248 together coordinate substrate.

Belongs to the DXO/Dom3Z family. As to quaternary structure, interacts with RAT1; the interaction is direct, stabilizes RAT1 protein structure and stimulates its exoribonuclease activity. The interaction also stimulates RAI1 pyrophosphohydrolase activity, probably by recruiting it to mRNA substrates. It depends on a divalent metal cation as a cofactor.

The protein localises to the nucleus. The enzyme catalyses a 5'-end NAD(+)-phospho-ribonucleoside in mRNA + H2O = a 5'-end phospho-ribonucleoside in mRNA + NAD(+) + H(+). It carries out the reaction a 5'-end (N(7)-methyl 5'-triphosphoguanosine)-ribonucleoside-ribonucleotide in mRNA + H2O = a (N(7)-methyl 5'-triphosphoguanosine)-nucleoside + a 5'-end phospho-ribonucleoside in mRNA + H(+). The catalysed reaction is a 5'-end triphospho-ribonucleoside in mRNA + H2O = a 5'-end phospho-ribonucleoside in mRNA + diphosphate + H(+). In terms of biological role, decapping enzyme for NAD-capped RNAs: specifically hydrolyzes the nicotinamide adenine dinucleotide (NAD) cap from a subset of RNAs by removing the entire NAD moiety from the 5'-end of an NAD-capped RNA. The NAD-cap is present at the 5'-end of some RNAs and snoRNAs. In contrast to the canonical 5'-end N7 methylguanosine (m7G) cap, the NAD cap promotes mRNA decay. Also acts as a non-canonical decapping enzyme that removes the entire cap structure of m7G capped or incompletely capped RNAs. Has decapping activity toward incomplete 5'-end m7G cap mRNAs such as unmethylated 5'-end-capped RNA (cap0), while it has no activity toward 2'-O-ribose methylated m7G cap (cap1). Also possesses RNA 5'-pyrophosphohydrolase activity by hydrolyzing the 5'-end triphosphate to release pyrophosphates. Stimulates exoribonuclease activity of Rat1, allowing it to degrade RNAs with stable secondary structure more effectively. This is Decapping nuclease RAI1 (RAI1) from Yarrowia lipolytica (strain CLIB 122 / E 150) (Yeast).